The sequence spans 767 residues: Probable beta-D-xylosidase 7 (767 aa).

A signal peptide spans 1-19; that stretch reads MAKQLLLLLLLFIVHGVES. N-linked (GlcNAc...) asparagine glycosylation is present at N100. Residue D292 is part of the active site. N643 carries an N-linked (GlcNAc...) asparagine glycan.

This sequence belongs to the glycosyl hydrolase 3 family.

It localises to the secreted. Its subcellular location is the extracellular space. The protein resides in the extracellular matrix. In Arabidopsis thaliana (Mouse-ear cress), this protein is Probable beta-D-xylosidase 7 (BXL7).